We begin with the raw amino-acid sequence, 316 residues long: Beta-ketoacyl-[acyl-carrier-protein] synthase III 1 (316 aa).

Catalysis depends on residues Cys112 and His243. Positions 244-248 (QANYR) are ACP-binding. Asn273 is a catalytic residue.

It belongs to the thiolase-like superfamily. FabH family. In terms of assembly, homodimer.

The protein localises to the cytoplasm. It carries out the reaction malonyl-[ACP] + acetyl-CoA + H(+) = 3-oxobutanoyl-[ACP] + CO2 + CoA. Its pathway is lipid metabolism; fatty acid biosynthesis. Functionally, catalyzes the condensation reaction of fatty acid synthesis by the addition to an acyl acceptor of two carbons from malonyl-ACP. Catalyzes the first condensation reaction which initiates fatty acid synthesis and may therefore play a role in governing the total rate of fatty acid production. Possesses both acetoacetyl-ACP synthase and acetyl transacylase activities. Its substrate specificity determines the biosynthesis of branched-chain and/or straight-chain of fatty acids. This is Beta-ketoacyl-[acyl-carrier-protein] synthase III 1 from Vibrio vulnificus (strain CMCP6).